The sequence spans 561 residues: Putative transport protein YbjL (561 aa).

5 helical membrane passes run 8–28 (LLNG…LCLG), 32–52 (LGSI…LLGQ), 66–86 (FMLF…SIFF), 94–114 (MLAL…GKLF), and 158–178 (NLSL…IVGA). 2 RCK C-terminal domains span residues 200–288 (RGLD…SFRN) and 292–373 (VFDR…RIGF). The next 5 membrane-spanning stretches (helical) occupy residues 383-403 (LLAF…TFQF), 406-426 (FSFG…LGFM), 451-471 (VFMA…LGAI), 475-495 (MLIA…LFGA), and 540-560 (AIAN…WPGL).

The protein belongs to the AAE transporter (TC 2.A.81) family. YbjL subfamily.

It is found in the cell membrane. The sequence is that of Putative transport protein YbjL from Shigella boydii serotype 4 (strain Sb227).